The primary structure comprises 448 residues: JmjC domain-containing protein D (448 aa).

Positions 305–448 (EQIPQLRNDI…SLSQSFSIFP (144 aa)) constitute a JmjC domain.

The chain is JmjC domain-containing protein D (jcdD) from Dictyostelium discoideum (Social amoeba).